Reading from the N-terminus, the 241-residue chain is Co-chaperone protein p23-1 (241 aa).

The region spanning 2–91 is the CS domain; the sequence is SRHPEVKWAE…AEPERWNKLL (90 aa). MGG repeat units follow at residues 129–131, 132–134, 135–137, 138–140, 141–143, 144–146, 147–149, 150–152, 162–164, 165–167, 168–170, 171–173, 180–182, 183–185, 186–188, 189–191, and 192–194; these read MGG. Positions 129–194 are 17 X 3 AA repeats of M-G-G; the sequence is MGGMGGMGGM…GMGGMGGMGG (66 aa). Positions 188–241 are disordered; sequence GMGGMGGMEEFEDSDDEEETAKSGDKKDDAVKEEGLATEKAPAAEETTSVKEDK. Acidic residues predominate over residues 196-206; the sequence is EEFEDSDDEEE. The span at 207–224 shows a compositional bias: basic and acidic residues; the sequence is TAKSGDKKDDAVKEEGLA. Residues 225 to 234 are compositionally biased toward low complexity; it reads TEKAPAAEET.

This sequence belongs to the p23/wos2 family. In terms of assembly, interacts with HSP90 in an ATP-dependent manner. Interacts with HSP90-5, HSP90-6 and HSP90-7. In terms of tissue distribution, widely expressed but preferentially in the root meristem.

It localises to the cytoplasm. Its subcellular location is the nucleus. Functionally, acts as a co-chaperone for HSP90. Controls root development through the modulation of auxin distribution in the root meristem. The polypeptide is Co-chaperone protein p23-1 (Arabidopsis thaliana (Mouse-ear cress)).